The primary structure comprises 244 residues: MGLELFLDLVSQPSRAVYIFAKKNGIPLELRTVDLVKGQHKSKEFLQINSLGKLPTLKDGDFILTESSAILIYLSCKYQTPDHWYPSDLQARARVHEYLGWHADCIRGTFGIPLWVQVLGPLIGVQVPKEKVERNRTAMDQALQWLEDKFLGDRPFLAGQQVTLADLMALEELMQPVALGYELFEGRPRLAAWRGRVEAFLGAELCQEAHSIILSILEQAAKKTLPTPSPEAYQAMLLRIARIP.

The region spanning 2 to 82 (GLELFLDLVS…YLSCKYQTPD (81 aa)) is the GST N-terminal domain. Residues 40-41 (HK), 53-54 (KL), 66-67 (ES), and 104-107 (DCIR) each bind glutathione. The GST C-terminal domain occupies 88–224 (DLQARARVHE…SILEQAAKKT (137 aa)).

It belongs to the GST superfamily. Theta family. In terms of assembly, homodimer. As to expression, expressed at low levels in liver. In lung, expressed at low levels in ciliated bronchiolar cells, alveolar macrophages and alveolar type II cells.

It localises to the cytoplasm. Its subcellular location is the cytosol. The protein resides in the nucleus. It catalyses the reaction RX + glutathione = an S-substituted glutathione + a halide anion + H(+). Its function is as follows. Conjugation of reduced glutathione to a wide number of exogenous and endogenous hydrophobic electrophiles. Has a sulfatase activity. This is Glutathione S-transferase theta-2 (GSTT2) from Homo sapiens (Human).